Here is a 195-residue protein sequence, read N- to C-terminus: HTH-type transcriptional regulator BetI (195 aa).

One can recognise an HTH tetR-type domain in the interval 8–68; that stretch reads SIRRRQLIDA…ATMRDITSQL (61 aa). The H-T-H motif DNA-binding region spans 31–50; that stretch reads TIAQIARRAGVSTGIISHYF.

It participates in amine and polyamine biosynthesis; betaine biosynthesis via choline pathway [regulation]. In terms of biological role, repressor involved in the biosynthesis of the osmoprotectant glycine betaine. It represses transcription of the choline transporter BetT and the genes of BetAB involved in the synthesis of glycine betaine. This is HTH-type transcriptional regulator BetI from Escherichia coli O17:K52:H18 (strain UMN026 / ExPEC).